Consider the following 345-residue polypeptide: Leucine zipper protein 2 (345 aa).

The first 19 residues, 1–19 (MKFNAAHYLLPLLPALVLS), serve as a signal peptide directing secretion. The stretch at 16 to 211 (LVLSTRQDYE…QMKAMKETVQ (196 aa)) forms a coiled coil. Residue asparagine 133 is glycosylated (N-linked (GlcNAc...) asparagine). Positions 164-192 (LRYGKKDLLFKAQQLTELEQKLAVAKNEL) are leucine-zipper. The tract at residues 223–345 (PPLSLMPSNP…GTPAREEKLL (123 aa)) is disordered. The segment covering 261 to 277 (GHHDSSQVQATKEESRR) has biased composition (basic and acidic residues). Residues 298–313 (PQSNSTAESELTTQKL) show a composition bias toward polar residues. N-linked (GlcNAc...) asparagine glycosylation is present at asparagine 301.

Expression found only in the brain and spinal cord.

The protein resides in the secreted. This is Leucine zipper protein 2 (Luzp2) from Mus musculus (Mouse).